We begin with the raw amino-acid sequence, 77 residues long: Spermatid-specific protein T2 (77 aa).

Residues 1-21 (MKVAANTSKMLVEKLDLLKGG) form a hydrophobic region. Residues 1–77 (MKVAANTSKM…YSRRRYRRRR (77 aa)) are disordered. Over residues 20–77 (GGRRRRRRSRRRRRSRRRRSRSPYRRRYRRRRRRRRSRRRRRYRRRRSYSRRRYRRRR) the composition is skewed to basic residues.

In terms of processing, phosphorylation occurs at different degrees. The triphosphorylated form may be predominant in T2. SP2 appears to be phosphorylated in elongated spermatids, but dephosphorylated in mature sperm cells. As to expression, testis.

Its subcellular location is the nucleus. The protein localises to the chromosome. Cuttlefish spermiogenesis is characterized by a double nuclear protein transition: histones -&gt; spermatid-specific proteins (T1/T2) -&gt; protamines (SP1/SP2). The protamines compact sperm DNA into a highly condensed, stable and inactive complex. This Sepia officinalis (Common cuttlefish) protein is Spermatid-specific protein T2.